The primary structure comprises 114 residues: Prefoldin subunit 6 (114 aa).

At Ser-2 the chain carries N-acetylserine.

Belongs to the prefoldin subunit beta family. As to quaternary structure, heterohexamer of two PFD-alpha type and four PFD-beta type subunits.

It is found in the nucleus. In terms of biological role, binds specifically to cytosolic chaperonin (c-CPN) and transfers target proteins to it. Binds to nascent polypeptide chain and promotes folding in an environment in which there are many competing pathways for nonnative proteins. In Saccharomyces cerevisiae (strain ATCC 204508 / S288c) (Baker's yeast), this protein is Prefoldin subunit 6 (YKE2).